The following is a 192-amino-acid chain: Adenylate kinase (192 aa).

ATP is bound at residue 10 to 15; it reads GSGKGT. The tract at residues 30 to 59 is NMP; it reads STGDMLREVISRETEVGRKAKAIINAGALV. AMP contacts are provided by residues Thr-31, Arg-36, 57–59, 85–88, and Gln-92; these read ALV and GYPR. Residues 126–142 are LID; sequence KRVQETIAVGGQVRSDD. Residue Arg-127 coordinates ATP. Residues Arg-139 and Arg-150 each coordinate AMP. Met-178 is a binding site for ATP.

It belongs to the adenylate kinase family. In terms of assembly, monomer.

The protein localises to the cytoplasm. The catalysed reaction is AMP + ATP = 2 ADP. It functions in the pathway purine metabolism; AMP biosynthesis via salvage pathway; AMP from ADP: step 1/1. In terms of biological role, catalyzes the reversible transfer of the terminal phosphate group between ATP and AMP. Plays an important role in cellular energy homeostasis and in adenine nucleotide metabolism. The polypeptide is Adenylate kinase (Bartonella quintana (strain Toulouse) (Rochalimaea quintana)).